We begin with the raw amino-acid sequence, 282 residues long: Anamorsin homolog (282 aa).

The N-terminal SAM-like domain stretch occupies residues 1–140; sequence MADLQGKAVL…KPVYEVGAAA (140 aa). Residues 141 to 192 form a linker region; it reads PLKLSFAKKKQSGAAAPAAQVAEVWTIATDDFDDDDLLENDGDELLDAEDLA. Residues Cys-203, Cys-214, Cys-217, and Cys-219 each coordinate [2Fe-2S] cluster. Residues 203-219 form a fe-S binding site A region; the sequence is CEVGAGGKRRACKNCTC. Residues Cys-243, Cys-246, Cys-254, and Cys-257 each contribute to the [4Fe-4S] cluster site. 2 short sequence motifs (cx2C motif) span residues 243-246 and 254-257; these read CGNC and CASC. Residues 243-257 form a fe-S binding site B region; the sequence is CGNCYLGDAFRCASC.

Belongs to the anamorsin family. As to quaternary structure, monomer. It depends on [2Fe-2S] cluster as a cofactor. Requires [4Fe-4S] cluster as cofactor.

It localises to the cytoplasm. The protein resides in the mitochondrion intermembrane space. Functionally, component of the cytosolic iron-sulfur (Fe-S) protein assembly (CIA) machinery. Required for the maturation of extramitochondrial Fe-S proteins. Part of an electron transfer chain functioning in an early step of cytosolic Fe-S biogenesis, facilitating the de novo assembly of a [4Fe-4S] cluster on the cytosolic Fe-S scaffold complex. Electrons are transferred from NADPH via a FAD- and FMN-containing diflavin oxidoreductase. Together with the diflavin oxidoreductase, also required for the assembly of the diferric tyrosyl radical cofactor of ribonucleotide reductase (RNR), probably by providing electrons for reduction during radical cofactor maturation in the catalytic small subunit. The polypeptide is Anamorsin homolog (Monosiga brevicollis (Choanoflagellate)).